We begin with the raw amino-acid sequence, 120 residues long: Large ribosomal subunit protein P3y (120 aa).

The segment covering 81–92 (GGAAAGGGGGGE) has biased composition (gly residues). The tract at residues 81 to 120 (GGAAAGGGGGGEAAAATKEEEKKKEESEEEEGDFGFDLFG) is disordered. Over residues 97–106 (TKEEEKKKEE) the composition is skewed to basic and acidic residues.

It belongs to the eukaryotic ribosomal protein P1/P2 family.

Plays an important role in the elongation step of protein synthesis. This chain is Large ribosomal subunit protein P3y (RPP3B), found in Arabidopsis thaliana (Mouse-ear cress).